The primary structure comprises 352 residues: Glycogen synthase kinase 3 (352 aa).

The region spanning 20–310 (YTVERVAGQG…PLDALCHPFF (291 aa)) is the Protein kinase domain. ATP contacts are provided by residues 26–34 (AGQGTFGTV) and lysine 49. Aspartate 152 functions as the Proton acceptor in the catalytic mechanism.

The protein belongs to the protein kinase superfamily. CMGC Ser/Thr protein kinase family. GSK-3 subfamily. In terms of assembly, inhibited by cyclin kinase 2 (CDK2) inhibitors, including GW8510.

It catalyses the reaction L-seryl-[tau protein] + ATP = O-phospho-L-seryl-[tau protein] + ADP + H(+). The enzyme catalyses L-threonyl-[tau protein] + ATP = O-phospho-L-threonyl-[tau protein] + ADP + H(+). The polypeptide is Glycogen synthase kinase 3 (Trypanosoma brucei brucei (strain 927/4 GUTat10.1)).